A 320-amino-acid polypeptide reads, in one-letter code: Fructose-1,6-bisphosphatase class 1 (320 aa).

Residues glutamate 93, aspartate 114, leucine 116, and aspartate 117 each contribute to the Mg(2+) site. Substrate-binding positions include 117–120 (DGSS), tyrosine 225, and lysine 256. Position 262 (glutamate 262) interacts with Mg(2+).

The protein belongs to the FBPase class 1 family. In terms of assembly, homotetramer. Mg(2+) is required as a cofactor.

The protein resides in the cytoplasm. It catalyses the reaction beta-D-fructose 1,6-bisphosphate + H2O = beta-D-fructose 6-phosphate + phosphate. Its pathway is carbohydrate biosynthesis; gluconeogenesis. This chain is Fructose-1,6-bisphosphatase class 1, found in Syntrophotalea carbinolica (strain DSM 2380 / NBRC 103641 / GraBd1) (Pelobacter carbinolicus).